The primary structure comprises 412 residues: Histidine--tRNA ligase (412 aa).

Belongs to the class-II aminoacyl-tRNA synthetase family. As to quaternary structure, homodimer.

Its subcellular location is the cytoplasm. It catalyses the reaction tRNA(His) + L-histidine + ATP = L-histidyl-tRNA(His) + AMP + diphosphate + H(+). The sequence is that of Histidine--tRNA ligase from Maridesulfovibrio salexigens (strain ATCC 14822 / DSM 2638 / NCIMB 8403 / VKM B-1763) (Desulfovibrio salexigens).